The sequence spans 110 residues: Multidrug transporter EmrE (110 aa).

4 consecutive transmembrane segments (helical) span residues 4–21 (YIYL…TTLM), 34–52 (VGTI…QTLA), 58–80 (IAYA…GFFG), and 87–104 (AIIG…INLL).

Belongs to the drug/metabolite transporter (DMT) superfamily. Small multidrug resistance (SMR) (TC 2.A.7.1) family. In terms of assembly, homodimer. Forms an antiparallel dimeric structure. Also forms dimers of homodimers.

It localises to the cell inner membrane. Its activity is regulated as follows. Substrate identity influences both the ground-state and transition-state energies for the conformational exchange process, emphasizing the coupling between substrate binding and transport. Multidrug efflux protein that confers resistance to a wide range of toxic compounds, including ethidium, methyl viologen, acriflavine, tetraphenylphosphonium (TPP(+)), benzalkonium, propidium, dequalinium and the aminoglycoside antibiotics streptomycin and tobramycin. Can also transport the osmoprotectants betaine and choline. The drug efflux is coupled to an influx of protons. Can couple antiport of a drug to either one or two protons, performing both electrogenic and electroneutral transport of a single substrate. Simultaneously binds and cotransports proton and drug. The polypeptide is Multidrug transporter EmrE (emrE) (Escherichia coli (strain K12)).